Here is a 261-residue protein sequence, read N- to C-terminus: Ribosome biogenesis protein C3_06160C_A (261 aa).

The tract at residues 1 to 38 is disordered; it reads MPQNEYIEQHIKKHGRRLDYEERKRKKEAREGHRVAKD. 2 consecutive short sequence motifs (nuclear localization signal) follow at residues 11–18 and 51–58; these read IKKHGRRL and AKKRYAEK. The segment covering 17 to 37 has biased composition (basic and acidic residues); that stretch reads RLDYEERKRKKEAREGHRVAK. Positions 59–85 are disordered; sequence VAMKKKIKAHQESKVKGPSTPKAEDGE.

It belongs to the eukaryotic ribosomal protein eS8 family. Ribosome biogenesis protein NSA2 subfamily. Component of the pre-66S ribosomal particle. Interacts with NOP7 and RRP1. Interacts with RSA4 (via WD repeats).

The protein resides in the nucleus. The protein localises to the nucleolus. Functionally, involved in the biogenesis of the 60S ribosomal subunit. May play a part in the quality control of pre-60S particles. In Candida albicans (strain SC5314 / ATCC MYA-2876) (Yeast), this protein is Ribosome biogenesis protein C3_06160C_A.